The chain runs to 57 residues: Large ribosomal subunit protein bL32 (57 aa).

This sequence belongs to the bacterial ribosomal protein bL32 family.

In Bacillus licheniformis (strain ATCC 14580 / DSM 13 / JCM 2505 / CCUG 7422 / NBRC 12200 / NCIMB 9375 / NCTC 10341 / NRRL NRS-1264 / Gibson 46), this protein is Large ribosomal subunit protein bL32.